Consider the following 317-residue polypeptide: F-box protein FBW2 (317 aa).

The F-box domain maps to 7–54 (FRHWDELIPDALGLIFSHLPLQEVLTVVPRVCKAWNRAVTGPYCWQEI).

Part of a SCF (SKP1-cullin-F-box) protein ligase complex. Interacts with CUL1, CUL2 and SPK1B/ASK2.

The protein resides in the nucleus. The protein operates within protein modification; protein ubiquitination. Its function is as follows. Component of SCF(ASK-cullin-F-box) E3 ubiquitin ligase complexes, which may mediate the ubiquitination and subsequent proteasomal degradation of target proteins. This Arabidopsis thaliana (Mouse-ear cress) protein is F-box protein FBW2 (FBW2).